A 349-amino-acid polypeptide reads, in one-letter code: Ribosomal RNA small subunit methyltransferase H (349 aa).

S-adenosyl-L-methionine is bound by residues 34 to 36 (GGH), Asp54, Phe81, Asp102, and Gln109. The segment at 328–349 (SRTGSVQHGQAKHKGVVQRGGS) is disordered.

It belongs to the methyltransferase superfamily. RsmH family.

It is found in the cytoplasm. It carries out the reaction cytidine(1402) in 16S rRNA + S-adenosyl-L-methionine = N(4)-methylcytidine(1402) in 16S rRNA + S-adenosyl-L-homocysteine + H(+). Specifically methylates the N4 position of cytidine in position 1402 (C1402) of 16S rRNA. The sequence is that of Ribosomal RNA small subunit methyltransferase H from Dehalococcoides mccartyi (strain ATCC BAA-2100 / JCM 16839 / KCTC 5957 / BAV1).